A 267-amino-acid chain; its full sequence is 4-hydroxy-tetrahydrodipicolinate reductase (267 aa).

NAD(+) is bound by residues 12–17 (GPRGRM), 100–102 (GTT), and 126–129 (APNF). The active-site Proton donor/acceptor is H156. A (S)-2,3,4,5-tetrahydrodipicolinate-binding site is contributed by H157. K160 (proton donor) is an active-site residue. 166 to 167 (GT) contributes to the (S)-2,3,4,5-tetrahydrodipicolinate binding site.

This sequence belongs to the DapB family.

The protein resides in the cytoplasm. It catalyses the reaction (S)-2,3,4,5-tetrahydrodipicolinate + NAD(+) + H2O = (2S,4S)-4-hydroxy-2,3,4,5-tetrahydrodipicolinate + NADH + H(+). The enzyme catalyses (S)-2,3,4,5-tetrahydrodipicolinate + NADP(+) + H2O = (2S,4S)-4-hydroxy-2,3,4,5-tetrahydrodipicolinate + NADPH + H(+). It functions in the pathway amino-acid biosynthesis; L-lysine biosynthesis via DAP pathway; (S)-tetrahydrodipicolinate from L-aspartate: step 4/4. Catalyzes the conversion of 4-hydroxy-tetrahydrodipicolinate (HTPA) to tetrahydrodipicolinate. This Bacillus licheniformis (strain ATCC 14580 / DSM 13 / JCM 2505 / CCUG 7422 / NBRC 12200 / NCIMB 9375 / NCTC 10341 / NRRL NRS-1264 / Gibson 46) protein is 4-hydroxy-tetrahydrodipicolinate reductase.